Consider the following 506-residue polypeptide: Transforming growth factor beta-1-induced transcript 1 protein (506 aa).

The short motif at 3 to 15 is the LD motif 1 element; sequence DLDALLADLQITT. The tract at residues 15–62 is disordered; the sequence is TPPRCPVLLTDSPEKPQPTETRPPPPPYDPKTAMSNKTSDHETFPVDK. A compositionally biased stretch (basic and acidic residues) spans 52 to 62; that stretch reads TSDHETFPVDK. 2 short sequence motifs (LD motif) span residues 87–99 and 139–150; these read ELDRLLNELNATQ and ELDRLMASLSDF. Disordered stretches follow at residues 154–201 and 221–244; these read NTVS…PTPK and SDEVTASRVPDSVSGSKVPEATSV. The span at 168-177 shows a compositional bias: basic and acidic residues; it reads GSEEVSRPGD. The LD motif 4 motif lies at 248 to 260; sequence DLDSMLVKLQSGL. LIM zinc-binding domains are found at residues 271–330, 331–388, 389–448, and 449–506; these read GLCE…LYAP, RCAL…RLFG, AVCA…RRGS, and LCAG…RLYG.

Belongs to the paxillin family. As to quaternary structure, interacts with tcf3 and tcf7l2.

Its subcellular location is the cell junction. It localises to the focal adhesion. The protein resides in the nucleus matrix. It is found in the cytoplasm. The protein localises to the cytoskeleton. In terms of biological role, functions as a molecular adapter coordinating multiple protein-protein interactions at the focal adhesion complex and in the nucleus. May regulate both Wnt and steroid signaling pathways and play a role in the processes of cell growth, proliferation, migration, differentiation and senescence. May have a zinc-dependent DNA-binding activity. The protein is Transforming growth factor beta-1-induced transcript 1 protein (tgfb1i1) of Xenopus laevis (African clawed frog).